A 249-amino-acid chain; its full sequence is 3-deoxy-D-manno-octulosonic acid kinase (249 aa).

Asp-175 is an active-site residue.

The protein belongs to the protein kinase superfamily. KdkA/RfaP family.

The protein resides in the cell inner membrane. The catalysed reaction is an alpha-Kdo-(2-&gt;6)-lipid IVA + ATP = a 4-O-phospho-alpha-Kdo-(2-&gt;6)-lipid IVA + ADP + H(+). It functions in the pathway bacterial outer membrane biogenesis; LPS core biosynthesis. Catalyzes the ATP-dependent phosphorylation of the 3-deoxy-D-manno-octulosonic acid (Kdo) residue in Kdo-lipid IV(A) at the 4-OH position. This is 3-deoxy-D-manno-octulosonic acid kinase from Stenotrophomonas maltophilia (strain R551-3).